The following is a 129-amino-acid chain: Aldose 1-epimerase (129 aa).

The protein belongs to the aldose epimerase family.

It carries out the reaction alpha-D-glucose = beta-D-glucose. The protein operates within carbohydrate metabolism; hexose metabolism. Mutarotase converts alpha-aldose to the beta-anomer. It is active on D-glucose, L-arabinose, D-xylose, D-galactose, maltose and lactose. This chain is Aldose 1-epimerase (galM), found in Lactobacillus helveticus (Lactobacillus suntoryeus).